The chain runs to 349 residues: DNA replication and repair protein RecF (349 aa).

ATP is bound at residue 30 to 37 (GKNGSGKT).

This sequence belongs to the RecF family.

Its subcellular location is the cytoplasm. Its function is as follows. The RecF protein is involved in DNA metabolism; it is required for DNA replication and normal SOS inducibility. RecF binds preferentially to single-stranded, linear DNA. It also seems to bind ATP. The chain is DNA replication and repair protein RecF from Francisella tularensis subsp. tularensis (strain FSC 198).